The sequence spans 1013 residues: Endosome/lysosome-associated apoptosis and autophagy regulator 1 (1013 aa).

Residues Met-1–Gly-41 form the signal peptide. At Thr-42–Lys-910 the chain is on the extracellular side. The N-linked (GlcNAc...) asparagine glycan is linked to Asn-153. Disulfide bonds link Cys-278–Cys-295, Cys-308–Cys-330, and Cys-311–Cys-342. N-linked (GlcNAc...) asparagine glycans are attached at residues Asn-404 and Asn-672. Residues Asn-656–Leu-858 enclose the MRH domain. 4 cysteine pairs are disulfide-bonded: Cys-658/Cys-704, Cys-714/Cys-739, Cys-808/Cys-844, and Cys-820/Cys-856. The chain crosses the membrane as a helical span at residues Val-911 to Trp-931. Residues Lys-932–Leu-1013 are Cytoplasmic-facing.

The protein belongs to the ELAPOR family. As to quaternary structure, interacts with HSPA5; may regulate the function of HSPA5 in apoptosis and cell proliferation. As to expression, expressed in normal endometrium but overexpressed in endometroid tumors.

It localises to the cell membrane. The protein resides in the late endosome membrane. It is found in the golgi apparatus. The protein localises to the trans-Golgi network membrane. Its subcellular location is the lysosome membrane. It localises to the endoplasmic reticulum membrane. May protect cells from cell death by inducing cytosolic vacuolization and up-regulating the autophagy pathway. May play a role in apoptosis and cell proliferation through its interaction with HSPA5. This Homo sapiens (Human) protein is Endosome/lysosome-associated apoptosis and autophagy regulator 1.